Consider the following 304-residue polypeptide: D-alanine--D-alanine ligase (304 aa).

Residues 103 to 301 (KQVWLALGLP…FDDLVWRILE (199 aa)) form the ATP-grasp domain. Position 132–187 (132–187 (VEMLGFPVIIKPAKEGSSVGVSRVFALEHLEEAVALAARYEGELLMEQLIEGDELT)) interacts with ATP. Positions 254, 268, and 270 each coordinate Mg(2+).

Belongs to the D-alanine--D-alanine ligase family. The cofactor is Mg(2+). Mn(2+) is required as a cofactor.

The protein resides in the cytoplasm. The enzyme catalyses 2 D-alanine + ATP = D-alanyl-D-alanine + ADP + phosphate + H(+). It participates in cell wall biogenesis; peptidoglycan biosynthesis. Cell wall formation. The protein is D-alanine--D-alanine ligase of Xylella fastidiosa (strain Temecula1 / ATCC 700964).